The chain runs to 800 residues: Phenylalanine--tRNA ligase beta subunit (800 aa).

The tRNA-binding domain maps to 39–148; sequence TAALAPFVVG…ADTPVGVPLV (110 aa). The B5 domain maps to 402-478; the sequence is VWRRTIALRP…RLHGFDLVPA (77 aa). Mg(2+) is bound by residues aspartate 456, aspartate 462, glutamate 465, and glutamate 466. Residues 706–799 enclose the FDX-ACB domain; sequence SPFQPVARDF…VTKLTGGSLR (94 aa).

This sequence belongs to the phenylalanyl-tRNA synthetase beta subunit family. Type 1 subfamily. In terms of assembly, tetramer of two alpha and two beta subunits. Requires Mg(2+) as cofactor.

The protein localises to the cytoplasm. The enzyme catalyses tRNA(Phe) + L-phenylalanine + ATP = L-phenylalanyl-tRNA(Phe) + AMP + diphosphate + H(+). This Rhodospirillum rubrum (strain ATCC 11170 / ATH 1.1.1 / DSM 467 / LMG 4362 / NCIMB 8255 / S1) protein is Phenylalanine--tRNA ligase beta subunit.